The chain runs to 215 residues: NADH-quinone oxidoreductase subunit C (215 aa).

This sequence belongs to the complex I 30 kDa subunit family. As to quaternary structure, NDH-1 is composed of 14 different subunits. Subunits NuoB, C, D, E, F, and G constitute the peripheral sector of the complex.

It is found in the cell inner membrane. It carries out the reaction a quinone + NADH + 5 H(+)(in) = a quinol + NAD(+) + 4 H(+)(out). Functionally, NDH-1 shuttles electrons from NADH, via FMN and iron-sulfur (Fe-S) centers, to quinones in the respiratory chain. The immediate electron acceptor for the enzyme in this species is believed to be ubiquinone. Couples the redox reaction to proton translocation (for every two electrons transferred, four hydrogen ions are translocated across the cytoplasmic membrane), and thus conserves the redox energy in a proton gradient. The polypeptide is NADH-quinone oxidoreductase subunit C (Methylobacterium sp. (strain 4-46)).